Here is a 277-residue protein sequence, read N- to C-terminus: NAD kinase (277 aa).

Catalysis depends on D67, which acts as the Proton acceptor. NAD(+) is bound by residues 67-68, R72, 137-138, K148, R165, D167, 178-183, L202, and Q236; these read DG, NE, and TGYAMS.

Belongs to the NAD kinase family. A divalent metal cation serves as cofactor.

It is found in the cytoplasm. It carries out the reaction NAD(+) + ATP = ADP + NADP(+) + H(+). In terms of biological role, involved in the regulation of the intracellular balance of NAD and NADP, and is a key enzyme in the biosynthesis of NADP. Catalyzes specifically the phosphorylation on 2'-hydroxyl of the adenosine moiety of NAD to yield NADP. The protein is NAD kinase of Pyrococcus abyssi (strain GE5 / Orsay).